Consider the following 346-residue polypeptide: E3 ubiquitin-protein ligase RNF146-A (346 aa).

The RING-type zinc-finger motif lies at 37-75 (CAICLQTCVHPVSLPCKHVFCYLCVKGASWLGKRCALCR). Positions 91–167 (PELKAASRGN…EHGRRRKIKR (77 aa)) constitute a WWE domain. Disordered regions lie at residues 195–240 (SSAD…GTSL) and 256–301 (ERSH…ALVA). Residues 202-216 (SVPAQSGASVQSSSV) show a composition bias toward low complexity. Acidic residues predominate over residues 281 to 295 (SIEETESDASSDSED).

Interacts with poly-ADP-ribosylated AXIN1, AXIN2, BLZF1 and CASC3. In terms of processing, ubiquitinated; autoubiquitinated. Autoubiquitination is enhanced upon poly(ADP-ribose)-binding.

The protein localises to the cytoplasm. Its subcellular location is the cytosol. It carries out the reaction S-ubiquitinyl-[E2 ubiquitin-conjugating enzyme]-L-cysteine + [acceptor protein]-L-lysine = [E2 ubiquitin-conjugating enzyme]-L-cysteine + N(6)-ubiquitinyl-[acceptor protein]-L-lysine.. The protein operates within protein modification; protein ubiquitination. Its function is as follows. E3 ubiquitin-protein ligase that specifically binds poly-ADP-ribosylated proteins and mediates their ubiquitination and subsequent degradation. Acts as an activator of the Wnt signaling pathway by mediating the ubiquitination of poly-ADP-ribosylated AXIN1 and AXIN2, 2 key components of the beta-catenin destruction complex. Acts in cooperation with tankyrase proteins (TNKS and TNKS2), which mediate poly-ADP-ribosylation of target proteins AXIN1, AXIN2, BLZF1, CASC3, TNKS and TNKS2. Recognizes and binds tankyrase-dependent poly-ADP-ribosylated proteins via its WWE domain and mediates their ubiquitination. The polypeptide is E3 ubiquitin-protein ligase RNF146-A (RNF146A) (Bos taurus (Bovine)).